Reading from the N-terminus, the 366-residue chain is MERDLERGPPGPPRPPLGPPLSSSIGLALLLLLLALLFWLYIVLSNWTGGALLVLYSFALMLIIIILIIFIFRRDLLCPLGGLGLLLLMVTLLLIALWNLHGQALYLGIVLFIFGCLLVLGLWIYFLEILWRLGATIWQLLAFILAFFLAIILLIIALYLQQNWWTLLVDLLWLLLFMAILIWMYFHGPRHTDEHHHDDSLPHPQQATDDSSHESDSNSNEGRHHLLVSGAGDGPPLCSQNLGAPGGGPDNGPQDPDNTDDNGPQDPDNTDDNGNTDDNGPQDPDNTDDNGPHDPLPHNPSDSAGNDGGPPNLTEEVENKGGDRGPPSMTDGGGGDPHLPTLLLGTSGSGGDDDDPHGPVQLSYYD.

Topologically, residues 1 to 23 (MERDLERGPPGPPRPPLGPPLSS) are cytoplasmic. A helical transmembrane segment spans residues 24-44 (SIGLALLLLLLALLFWLYIVL). At 45 to 51 (SNWTGGA) the chain is on the extracellular side. Residues 52-72 (LLVLYSFALMLIIIILIIFIF) traverse the membrane as a helical segment. Residues 73–75 (RRD) are Cytoplasmic-facing. The chain crosses the membrane as a helical span at residues 76-96 (LLCPLGGLGLLLLMVTLLLIA). Topologically, residues 97-106 (LWNLHGQALY) are extracellular. The helical transmembrane segment at 107-127 (LGIVLFIFGCLLVLGLWIYFL) threads the bilayer. At 128 to 139 (EILWRLGATIWQ) the chain is on the cytoplasmic side. The helical transmembrane segment at 140-160 (LLAFILAFFLAIILLIIALYL) threads the bilayer. At 161–163 (QQN) the chain is on the extracellular side. A helical transmembrane segment spans residues 164–184 (WWTLLVDLLWLLLFMAILIWM). Topologically, residues 185–366 (YFHGPRHTDE…HGPVQLSYYD (182 aa)) are cytoplasmic. Positions 194–232 (EHHHDDSLPHPQQATDDSSHESDSNSNEGRHHLLVSGAG) are CTAR1. The interval 194 to 366 (EHHHDDSLPH…HGPVQLSYYD (173 aa)) is disordered. The Interaction with host TRAF proteins signature appears at 204–208 (PQQAT). Residues 210–224 (DSSHESDSNSNEGRH) are compositionally biased toward basic and acidic residues. 2 stretches are compositionally biased toward low complexity: residues 251-267 (NGPQ…PQDP) and 337-346 (PHLPTLLLGT). Residues 332–366 (GGGGDPHLPTLLLGTSGSGGDDDDPHGPVQLSYYD) are CTAR2.

This sequence belongs to the herpesviridae LMP-1 family. Interacts (via PXQXT motif) with host tumor necrosis factor receptor-associated factor (TRAF) proteins TRAF1, TRAF2, TRAF3 and TRAF5. Interacts with human protein ZMYND11; leading to negatively regulate NF-kappa-B activation. Interacts with host UBE2I; this interaction induces the sumoylation of various cellular proteins. Interacts with host IRF7. In terms of processing, ubiquitinated on the N-terminus.

Its subcellular location is the host cell membrane. Functionally, acts as a CD40 functional homolog to prevent apoptosis of infected B-lymphocytes and drive their proliferation. Functions as a constitutively active tumor necrosis factor receptor that induces the activation of several signaling pathways, including those of the NF-kappa-B family. LMP1 signaling leads to up-regulation of antiapoptotic proteins and provide growth signals in latently infected cells. Interacts with host UBE2I and subsequently affects the sumoylation state of several cellular proteins. For example, induces the sumoylation of host IRF7 thereby limiting its transcriptional activity and modulating the activation of innate immune responses. Also inhibits host IFN-alpha-stimulated STAT2 nuclear translocation and interferon-stimulated response element transcriptional activity by interacting with and inhibiting host TYK2. Induces SUMO expression during viral latency thereby dysregulating the host sumoylation processes. This Homo sapiens (Human) protein is Latent membrane protein 1 (LMP1).